The sequence spans 179 residues: Iron sulfur cluster assembly protein 1, mitochondrial (179 aa).

Residues 160-179 (RSVKQPTLGPEAAQAETIAT) are disordered.

The protein belongs to the NifU family. Component of the core Fe-S cluster (ISC) assembly machinery. The cofactor is [2Fe-2S] cluster.

Its subcellular location is the mitochondrion matrix. Its pathway is cofactor biosynthesis; iron-sulfur cluster biosynthesis. Functionally, scaffold protein for the de novo synthesis of iron-sulfur (Fe-S) clusters within mitochondria, which is required for maturation of both mitochondrial and cytoplasmic [2Fe-2S] and [4Fe-4S] proteins. First, a [2Fe-2S] cluster is transiently assembled on the scaffold protein ISU1. In a second step, the cluster is released from ISU1, transferred to a glutaredoxin, followed by the formation of mitochondrial [2Fe-2S] proteins, the synthesis of [4Fe-4S] clusters and their target-specific insertion into the recipient apoproteins. Cluster assembly on ISU1 depends on the function of the cysteine desulfurase complex NFS1-ISD11, which serves as the sulfur donor for cluster synthesis, the iron-binding protein frataxin as the putative iron donor, and the electron transfer chain comprised of ferredoxin reductase and ferredoxin, which receive their electrons from NADH. This chain is Iron sulfur cluster assembly protein 1, mitochondrial (ISU1), found in Debaryomyces hansenii (strain ATCC 36239 / CBS 767 / BCRC 21394 / JCM 1990 / NBRC 0083 / IGC 2968) (Yeast).